The chain runs to 266 residues: Uxu operon regulator (266 aa).

Residues 23-91 (NRTYTRIGQL…KGSGVYVVRT (69 aa)) form the HTH gntR-type domain. A DNA-binding region (H-T-H motif) is located at residues 51–70 (EREISEKFGVSRTIVREAMV).

In terms of biological role, repressor for the uxuRBA operon. This is Uxu operon regulator (uxuR) from Haemophilus influenzae (strain ATCC 51907 / DSM 11121 / KW20 / Rd).